The sequence spans 1238 residues: Erythroid differentiation-related factor 1 (1238 aa).

4 disordered regions span residues 1–38, 220–268, 517–561, and 620–647; these read MGDAKEAGAEGPPAGAAARGGLSLLSQGESEESSAQGS, QPVS…GSEP, PKKE…SDDS, and KKESDLPAADPSTPIPLKYEDESSRGGP. 3 stretches are compositionally biased toward low complexity: residues 9 to 38, 223 to 241, and 253 to 263; these read AEGPPAGAAARGGLSLLSQGESEESSAQGS, SSTAEQQESSSSDQTNDSE, and SSVSEDPSASS. A compositionally biased stretch (acidic residues) spans 530-547; that stretch reads NSDESYSEEEEEMPDSDE. TPR repeat units follow at residues 693–726 and 914–953; these read SKAYYVLSDAAMSLQKYGRALRYIKLALQSHDTY and AQAHCGAGDELKREFSPEEGLYYNKAIDYYLKALRSLGTR.

It is found in the nucleus. Transcription factor involved in erythroid differentiation. Involved in transcriptional activation of the globin gene. This is Erythroid differentiation-related factor 1 (EDRF1) from Homo sapiens (Human).